The primary structure comprises 701 residues: Polyribonucleotide nucleotidyltransferase (701 aa).

The Mg(2+) site is built by Asp490 and Asp496. The 60-residue stretch at 557-616 folds into the KH domain; that stretch reads PKVVTMSINPDKIRDVIGPGGKKINEIIDETGVKLDIEQDGTIFIGAVDQAMINRAKEII. The S1 motif domain maps to 626 to 694; that stretch reads GQVYHAKVKR…KQGRVNASHK (69 aa).

It belongs to the polyribonucleotide nucleotidyltransferase family. Mg(2+) serves as cofactor.

It is found in the cytoplasm. The enzyme catalyses RNA(n+1) + phosphate = RNA(n) + a ribonucleoside 5'-diphosphate. In terms of biological role, involved in mRNA degradation. Catalyzes the phosphorolysis of single-stranded polyribonucleotides processively in the 3'- to 5'-direction. In Staphylococcus epidermidis (strain ATCC 12228 / FDA PCI 1200), this protein is Polyribonucleotide nucleotidyltransferase.